A 388-amino-acid chain; its full sequence is Succinate--CoA ligase [ADP-forming] subunit beta (388 aa).

An ATP-grasp domain is found at 9–245 (KELLAGYGLP…KSQENERELK (237 aa)). Residues K46, 53–55 (GRG), E100, Y103, and E108 each bind ATP. Positions 200 and 214 each coordinate Mg(2+). Substrate-binding positions include N265 and 322 to 324 (GIV).

Belongs to the succinate/malate CoA ligase beta subunit family. As to quaternary structure, heterotetramer of two alpha and two beta subunits. Requires Mg(2+) as cofactor.

It catalyses the reaction succinate + ATP + CoA = succinyl-CoA + ADP + phosphate. It carries out the reaction GTP + succinate + CoA = succinyl-CoA + GDP + phosphate. The protein operates within carbohydrate metabolism; tricarboxylic acid cycle; succinate from succinyl-CoA (ligase route): step 1/1. Succinyl-CoA synthetase functions in the citric acid cycle (TCA), coupling the hydrolysis of succinyl-CoA to the synthesis of either ATP or GTP and thus represents the only step of substrate-level phosphorylation in the TCA. The beta subunit provides nucleotide specificity of the enzyme and binds the substrate succinate, while the binding sites for coenzyme A and phosphate are found in the alpha subunit. This Neisseria meningitidis serogroup C / serotype 2a (strain ATCC 700532 / DSM 15464 / FAM18) protein is Succinate--CoA ligase [ADP-forming] subunit beta.